The sequence spans 294 residues: ATP synthase gamma chain (294 aa).

Belongs to the ATPase gamma chain family. F-type ATPases have 2 components, CF(1) - the catalytic core - and CF(0) - the membrane proton channel. CF(1) has five subunits: alpha(3), beta(3), gamma(1), delta(1), epsilon(1). CF(0) has three main subunits: a, b and c.

It localises to the cell inner membrane. Its function is as follows. Produces ATP from ADP in the presence of a proton gradient across the membrane. The gamma chain is believed to be important in regulating ATPase activity and the flow of protons through the CF(0) complex. This Campylobacter jejuni (strain RM1221) protein is ATP synthase gamma chain.